The sequence spans 282 residues: MGKFTYDINRYEPKQMVALPLCLLILSVIFLAFNTVSTGMPVEPGIDFAGGVAVTLSTSDSVDVIEDYFADYPLKISESDVAAGYLVFNYLEGDSFKDLTEHITARYPDATIYQMGETFGKTLQSQAIWALLFAFVLMAIVVFVAFRIFIPSVAVVLSAFSDIVITAAFMDVFGLTLSLGTTAALLMLIGYSVDSDVLLTTRLLKRQGKVDEKFRGAFRTGIIMTTTTLAAVVVMFIVFSLGQVTLIRDISAVLIIGLIIDMMNTWMLNAGLLKWYVKKGGK.

Transmembrane regions (helical) follow at residues 16–36, 126–146, 148–168, 169–189, 221–241, and 253–273; these read MVALPLCLLILSVIFLAFNTV, QAIWALLFAFVLMAIVVFVAF, IFIPSVAVVLSAFSDIVITAA, FMDVFGLTLSLGTTAALLMLI, GIIMTTTTLAAVVVMFIVFSL, and VLIIGLIIDMMNTWMLNAGLL.

This sequence belongs to the SecD/SecF family. SecF subfamily. In terms of assembly, part of the protein translocation apparatus. Forms a complex with SecD.

The protein resides in the cell membrane. Functionally, involved in protein export. This Methanolacinia petrolearia (strain DSM 11571 / OCM 486 / SEBR 4847) (Methanoplanus petrolearius) protein is Protein-export membrane protein SecF.